Reading from the N-terminus, the 435-residue chain is Serine--tRNA ligase (435 aa).

238–240 is a binding site for L-serine; the sequence is TAE. 269–271 lines the ATP pocket; sequence RKE. L-serine is bound at residue Glu292. ATP is bound at residue 356-359; the sequence is EISS. L-serine is bound at residue Ser391.

Belongs to the class-II aminoacyl-tRNA synthetase family. Type-1 seryl-tRNA synthetase subfamily. As to quaternary structure, homodimer. The tRNA molecule binds across the dimer.

It localises to the cytoplasm. The enzyme catalyses tRNA(Ser) + L-serine + ATP = L-seryl-tRNA(Ser) + AMP + diphosphate + H(+). It catalyses the reaction tRNA(Sec) + L-serine + ATP = L-seryl-tRNA(Sec) + AMP + diphosphate + H(+). It functions in the pathway aminoacyl-tRNA biosynthesis; selenocysteinyl-tRNA(Sec) biosynthesis; L-seryl-tRNA(Sec) from L-serine and tRNA(Sec): step 1/1. Functionally, catalyzes the attachment of serine to tRNA(Ser). Is also able to aminoacylate tRNA(Sec) with serine, to form the misacylated tRNA L-seryl-tRNA(Sec), which will be further converted into selenocysteinyl-tRNA(Sec). In Leuconostoc mesenteroides subsp. mesenteroides (strain ATCC 8293 / DSM 20343 / BCRC 11652 / CCM 1803 / JCM 6124 / NCDO 523 / NBRC 100496 / NCIMB 8023 / NCTC 12954 / NRRL B-1118 / 37Y), this protein is Serine--tRNA ligase.